The following is a 505-amino-acid chain: Flagellin (505 aa).

Belongs to the bacterial flagellin family.

It is found in the secreted. The protein resides in the bacterial flagellum. Flagellin is the subunit protein which polymerizes to form the filaments of bacterial flagella. The chain is Flagellin (fliC) from Salmonella dublin.